The chain runs to 189 residues: Elongation factor P (189 aa).

N6-(3,6-diaminohexanoyl)-5-hydroxylysine is present on lysine 34.

Belongs to the elongation factor P family. In terms of processing, may be beta-lysylated on the epsilon-amino group of Lys-34 by the combined action of EpmA and EpmB, and then hydroxylated on the C5 position of the same residue by EpmC (if this protein is present). Lysylation is critical for the stimulatory effect of EF-P on peptide-bond formation. The lysylation moiety may extend toward the peptidyltransferase center and stabilize the terminal 3-CCA end of the tRNA. Hydroxylation of the C5 position on Lys-34 may allow additional potential stabilizing hydrogen-bond interactions with the P-tRNA.

It localises to the cytoplasm. The protein operates within protein biosynthesis; polypeptide chain elongation. Its function is as follows. Involved in peptide bond synthesis. Alleviates ribosome stalling that occurs when 3 or more consecutive Pro residues or the sequence PPG is present in a protein, possibly by augmenting the peptidyl transferase activity of the ribosome. Modification of Lys-34 is required for alleviation. The polypeptide is Elongation factor P (Francisella philomiragia subsp. philomiragia (strain ATCC 25017 / CCUG 19701 / FSC 153 / O#319-036)).